The chain runs to 222 residues: Coiled-coil domain-containing protein 43 homolog (222 aa).

Residues 80-111 are a coiled coil; sequence ETENKLKLTNLKLEQELKIKETTQSEINEEEK. Disordered regions lie at residues 102–126 and 159–222; these read TQSEINEEEKYENPYHKMSREEQKK and EDNK…KRRL. Basic and acidic residues-rich tracts occupy residues 112-126 and 175-212; these read YENPYHKMSREEQKK and RIADEEKAKREKSKIEHQKKVQRDKEALEKQKRDEEKK. Residues 168–222 adopt a coiled-coil conformation; the sequence is GENLNAKRIADEEKAKREKSKIEHQKKVQRDKEALEKQKRDEEKKKTVKKEKRRL. The span at 213–222 shows a compositional bias: basic residues; the sequence is KTVKKEKRRL.

This sequence belongs to the CCDC43 family.

In Dictyostelium discoideum (Social amoeba), this protein is Coiled-coil domain-containing protein 43 homolog.